We begin with the raw amino-acid sequence, 538 residues long: Phosphoenolpyruvate carboxykinase (ATP) (538 aa).

Substrate is bound by residues Arg-61, Tyr-195, and Lys-201. Residues Lys-201, His-220, and 236 to 244 (GLSGTGKTT) contribute to the ATP site. 2 residues coordinate Mn(2+): Lys-201 and His-220. Residue Asp-257 participates in Mn(2+) binding. Glu-285, Arg-323, and Thr-449 together coordinate ATP. A substrate-binding site is contributed by Arg-323.

Belongs to the phosphoenolpyruvate carboxykinase (ATP) family. The cofactor is Mn(2+).

Its subcellular location is the cytoplasm. It catalyses the reaction oxaloacetate + ATP = phosphoenolpyruvate + ADP + CO2. It participates in carbohydrate biosynthesis; gluconeogenesis. Its function is as follows. Involved in the gluconeogenesis. Catalyzes the conversion of oxaloacetate (OAA) to phosphoenolpyruvate (PEP) through direct phosphoryl transfer between the nucleoside triphosphate and OAA. This is Phosphoenolpyruvate carboxykinase (ATP) from Nitrobacter winogradskyi (strain ATCC 25391 / DSM 10237 / CIP 104748 / NCIMB 11846 / Nb-255).